A 295-amino-acid chain; its full sequence is Shikimate dehydrogenase (NADP(+)) (295 aa).

Shikimate contacts are provided by residues 21–23 (SLS) and Thr-68. Lys-72 (proton acceptor) is an active-site residue. Shikimate contacts are provided by Asn-93 and Asp-108. NADP(+) is bound by residues 132–136 (GAGGA), 156–161 (NRTPER), and Leu-228. Residue Tyr-230 coordinates shikimate. Gly-251 lines the NADP(+) pocket.

It belongs to the shikimate dehydrogenase family. As to quaternary structure, homodimer.

It carries out the reaction shikimate + NADP(+) = 3-dehydroshikimate + NADPH + H(+). Its pathway is metabolic intermediate biosynthesis; chorismate biosynthesis; chorismate from D-erythrose 4-phosphate and phosphoenolpyruvate: step 4/7. In terms of biological role, involved in the biosynthesis of the chorismate, which leads to the biosynthesis of aromatic amino acids. Catalyzes the reversible NADPH linked reduction of 3-dehydroshikimate (DHSA) to yield shikimate (SA). This Moorella thermoacetica (strain ATCC 39073 / JCM 9320) protein is Shikimate dehydrogenase (NADP(+)).